Here is a 257-residue protein sequence, read N- to C-terminus: Probable S-adenosylmethionine-dependent methyltransferase MSMEG_2350/MSMEI_2290 (257 aa).

The protein belongs to the methyltransferase superfamily.

Its function is as follows. Probable S-adenosylmethionine-dependent methyltransferase required for the 6-O-methylation of the polysaccharide backbone of 6-O-methylglucosyl lipopolysaccharides (MGLP). The chain is Probable S-adenosylmethionine-dependent methyltransferase MSMEG_2350/MSMEI_2290 from Mycolicibacterium smegmatis (strain ATCC 700084 / mc(2)155) (Mycobacterium smegmatis).